A 144-amino-acid polypeptide reads, in one-letter code: Universal stress protein F (144 aa).

The protein belongs to the universal stress protein A family. Homodimer.

In Escherichia coli O157:H7, this protein is Universal stress protein F (uspF).